Here is a 347-residue protein sequence, read N- to C-terminus: Homocysteine S-methyltransferase 3 (347 aa).

A Hcy-binding domain is found at 12–333; sequence LMTDFLEKCG…NTIRAIAKVL (322 aa). Residues cysteine 251, cysteine 318, and cysteine 319 each contribute to the Zn(2+) site.

Monomer. The cofactor is Zn(2+). In terms of tissue distribution, expressed predominantly in rosette leaves. Expressed in roots, cauline leaves and developing seeds.

The catalysed reaction is S-methyl-L-methionine + L-homocysteine = 2 L-methionine + H(+). Its function is as follows. Catalyzes methyl transfer from S-methylmethionine (SMM) to adenosyl-L-homocysteine (AdoMet). SMM degradation (by HMT-1, HMT-2 and HMT-3) and biosynthesis (by MMT1) constitute the SMM cycle in plants, which is probably required to achieve short term control of AdoMet level. The protein is Homocysteine S-methyltransferase 3 (HMT3) of Arabidopsis thaliana (Mouse-ear cress).